Here is a 384-residue protein sequence, read N- to C-terminus: Inactive lipoate--protein ligase 2 (384 aa).

Positions 79–303 (NESKGNECIF…HIKHIINYKN (225 aa)) constitute a BPL/LPL catalytic domain.

It localises to the mitochondrion. It is found in the plastid. The protein localises to the apicoplast. In the mitochondrion and together with LipL1, involved in the lipoylation of the E2 component of the branched chain alpha-ketoacid dehydrogenase complex BCKDH-E2/BCDH and the E2 component of the alpha -ketoglutarate dehydrogenase complex KDH. LipL1 is responsible for catalysing the activation of lipoate, forming lipoyl-AMP while LipL2 is required but is not capable of catalyzing this reaction. Although its role is unclear, it may catalyze the transfer of lipoyl groups from lipoyl-AMP to BCDH and KDH or act as an effector protein. The polypeptide is Inactive lipoate--protein ligase 2 (Plasmodium falciparum (isolate 3D7)).